The sequence spans 287 residues: Putative sugar uptake protein EF_0928 (287 aa).

10 consecutive transmembrane segments (helical) span residues 5–27, 32–49, 53–71, 84–106, 116–134, 155–177, 182–200, 207–229, 234–256, and 265–284; these read IALV…GGSA, LGMT…FFVI, LTTA…WSLG, VSVG…GAVF, FVVG…YLTA, IRAL…ATGL, IILP…FAFK, FVWM…LLTM, LAIS…IFLL, and MFYV…LLGY.

This sequence belongs to the GRP transporter (TC 2.A.7.5) family.

The protein resides in the cell membrane. This Enterococcus faecalis (strain ATCC 700802 / V583) protein is Putative sugar uptake protein EF_0928.